A 91-amino-acid polypeptide reads, in one-letter code: Transcription factor ILI3 (91 aa).

A bHLH domain is found at Ser-3 to Leu-58.

Belongs to the bHLH protein family.

Its function is as follows. Atypical and probable non DNA-binding bHLH transcription that integrates multiple signaling pathways to regulate cell elongation and plant development. The sequence is that of Transcription factor ILI3 (ILI3) from Oryza sativa subsp. indica (Rice).